We begin with the raw amino-acid sequence, 440 residues long: Xylose isomerase (440 aa).

Residues histidine 101 and aspartate 104 contribute to the active site. Glutamate 232, glutamate 268, histidine 271, aspartate 296, aspartate 307, aspartate 309, and aspartate 339 together coordinate Mg(2+).

The protein belongs to the xylose isomerase family. As to quaternary structure, homotetramer. Mg(2+) is required as a cofactor.

It localises to the cytoplasm. The enzyme catalyses alpha-D-xylose = alpha-D-xylulofuranose. The protein is Xylose isomerase of Enterobacter sp. (strain 638).